The primary structure comprises 61 residues: MAEAKTVTVRQTGSPIRREKDQRATLVGLGLNRVGRVSTLQDNPSTRGMIRKVQHLLEIVE.

The protein belongs to the universal ribosomal protein uL30 family. As to quaternary structure, part of the 50S ribosomal subunit.

The protein is Large ribosomal subunit protein uL30 of Caulobacter vibrioides (strain ATCC 19089 / CIP 103742 / CB 15) (Caulobacter crescentus).